The primary structure comprises 224 residues: BOS complex subunit TMEM147 (224 aa).

The chain crosses the membrane as a helical span at residues 1-21 (MTLFHFGNCFALAYFPYFITY). Residues 22–34 (KCSGLSEYNAFWK) are Cytoplasmic-facing. Residues 35–58 (CVQAGVTYLFVQLCKMLFLATFFP) form a helical membrane-spanning segment. Topologically, residues 59–66 (TWEGGIYD) are lumenal. A helical transmembrane segment spans residues 67 to 88 (FIGEFMKASVDVADLIGLNLVM). Residues 89-98 (SRNAGKGEYK) lie on the Cytoplasmic side of the membrane. A helical membrane pass occupies residues 99 to 124 (IMVAALGWATAELIMSRCIPLWVGAR). Residues 125–129 (GIEFD) are Lumenal-facing. The helical transmembrane segment at 130 to 155 (WKYIQMSIDSNISLVHYIVASAQVWM) threads the bilayer. Residues 156–164 (ITRYDLYHT) lie on the Cytoplasmic side of the membrane. A helical transmembrane segment spans residues 165–187 (FRPAVLLLMFLSVYKAFVMETFV). Residues 188–194 (HLCSLGS) are Lumenal-facing. A helical membrane pass occupies residues 195 to 216 (WAALLARAVVTGLLALSTLALY). Topologically, residues 217-224 (VAVVNVHS) are cytoplasmic.

Belongs to the TMEM147 family. Component of the back of Sec61 (BOS) complex, composed of NCLN/Nicalin, NOMO (NOMO1, NOMO2 or NOMO3) and TMEM147. The BOS complex is part of the multi-pass translocon (MPT) complex, composed of three subcomplexes, the GEL complex (composed of RAB5IF/OPTI and TMCO1), the BOS complex (composed of NCLN/Nicalin, NOMO and TMEM147) and the PAT complex (composed of WDR83OS/Asterix and CCDC47). The MPT complex associates with the SEC61 complex. Interacts with CHRM3, CHRM1 and AVPR2. Interacts with LBR; promoting LBR localization to the nucleus inner membrane. Interacts with DHCR7.

Its subcellular location is the endoplasmic reticulum membrane. It is found in the nucleus membrane. The protein localises to the cell membrane. Functionally, component of the multi-pass translocon (MPT) complex that mediates insertion of multi-pass membrane proteins into the lipid bilayer of membranes. The MPT complex takes over after the SEC61 complex: following membrane insertion of the first few transmembrane segments of proteins by the SEC61 complex, the MPT complex occludes the lateral gate of the SEC61 complex to promote insertion of subsequent transmembrane regions. Also acts as a negative regulator of CHRM3 function, most likely by interfering with its trafficking to the cell membrane. Negatively regulates CHRM3-mediated calcium mobilization and activation of RPS6KA1/p90RSK activity. Regulates LBR localization to the nucleus inner membrane. In Homo sapiens (Human), this protein is BOS complex subunit TMEM147.